A 167-amino-acid chain; its full sequence is 16S rRNA aminocarboxypropyltransferase (167 aa).

5 residues coordinate S-adenosyl-L-methionine: threonine 17, valine 62, leucine 84, tyrosine 99, and serine 103.

Belongs to the TDD superfamily. TSR3 family.

Its subcellular location is the cytoplasm. The catalysed reaction is an N(1)-methylpseudouridine in rRNA + S-adenosyl-L-methionine = N(1)-methyl-N(3)-[(3S)-3-amino-3-carboxypropyl]pseudouridine in rRNA + S-methyl-5'-thioadenosine + H(+). Its function is as follows. Aminocarboxypropyltransferase that catalyzes the aminocarboxypropyl transfer on pseudouridine corresponding to position 914 in M.jannaschii 16S rRNA. It constitutes the last step in biosynthesis of the hypermodified N1-methyl-N3-(3-amino-3-carboxypropyl) pseudouridine (m1acp3-Psi). This is 16S rRNA aminocarboxypropyltransferase from Sulfurisphaera tokodaii (strain DSM 16993 / JCM 10545 / NBRC 100140 / 7) (Sulfolobus tokodaii).